The sequence spans 644 residues: Exoribonuclease 2 (644 aa).

In terms of domain architecture, RNB spans 189-516 (REDLTALNFV…NHRLLKAIIT (328 aa)). Residues 561–643 (DTRFPAEIID…ETRNVVARPV (83 aa)) enclose the S1 motif domain.

The protein belongs to the RNR ribonuclease family. RNase II subfamily.

It is found in the cytoplasm. The catalysed reaction is Exonucleolytic cleavage in the 3'- to 5'-direction to yield nucleoside 5'-phosphates.. Its function is as follows. Involved in mRNA degradation. Hydrolyzes single-stranded polyribonucleotides processively in the 3' to 5' direction. In Yersinia enterocolitica serotype O:8 / biotype 1B (strain NCTC 13174 / 8081), this protein is Exoribonuclease 2.